Reading from the N-terminus, the 315-residue chain is Aspartate carbamoyltransferase catalytic subunit (315 aa).

2 residues coordinate carbamoyl phosphate: arginine 61 and threonine 62. Lysine 90 lines the L-aspartate pocket. Residues arginine 111, histidine 139, and glutamine 142 each contribute to the carbamoyl phosphate site. Arginine 172 and arginine 234 together coordinate L-aspartate. 2 residues coordinate carbamoyl phosphate: leucine 274 and proline 275.

It belongs to the aspartate/ornithine carbamoyltransferase superfamily. ATCase family. As to quaternary structure, heterooligomer of catalytic and regulatory chains.

It catalyses the reaction carbamoyl phosphate + L-aspartate = N-carbamoyl-L-aspartate + phosphate + H(+). The protein operates within pyrimidine metabolism; UMP biosynthesis via de novo pathway; (S)-dihydroorotate from bicarbonate: step 2/3. In terms of biological role, catalyzes the condensation of carbamoyl phosphate and aspartate to form carbamoyl aspartate and inorganic phosphate, the committed step in the de novo pyrimidine nucleotide biosynthesis pathway. The polypeptide is Aspartate carbamoyltransferase catalytic subunit (Hyperthermus butylicus (strain DSM 5456 / JCM 9403 / PLM1-5)).